The following is a 490-amino-acid chain: MVEDQRRQLMEEEDEERRLILEEQRRRMMRADRDEEEEEEEEEEEEEREEDDGRRSEDEMREDEPPGRRETSHAHIDLNMMRANAHLKEMMDKNRRFVSTRLEEPITQSPPLTNGSNHDNDHDPYLSHRAAHGGSPDLPHSYMKAAHPLIKKEDGIAKMEMDIGLKDEMKMGAGLEDRDGDKPQTEWSFEEQFKQLYELSTDSKRKEFLDDLFSYMQKRGTPVNRIPIMAKQVLDLYELYNLVVAKGGLVEVINKKQWREITKGLNLPASITSAAFTLRTQYMKYLYPYECEKKGLSSPSELQSAIDGNRREGRRPSYHSPHMHPRGPSLAYHHGLDLHTPSGSPPPTMIPHPSRIPTLPPRLSPSTSPIEDDHPVPLGFPRQGTLSHAAMLAELAERGSIPPPSKRSLLAEEHHHRLLQLQQQHLVMPTAHLKVSSARAHPENGMPLFEMRGDNSLVMSIELNSVLYQGVLYPRGGTRSSLDRDTSTPV.

Basic and acidic residues predominate over residues 1 to 33; it reads MVEDQRRQLMEEEDEERRLILEEQRRRMMRADR. 2 disordered regions span residues 1–77 and 106–135; these read MVED…AHID and ITQS…HGGS. The segment covering 34 to 50 has biased composition (acidic residues); that stretch reads DEEEEEEEEEEEEEREE. Over residues 51–76 the composition is skewed to basic and acidic residues; it reads DDGRRSEDEMREDEPPGRRETSHAHI. Over residues 106–117 the composition is skewed to polar residues; that stretch reads ITQSPPLTNGSN. The 93-residue stretch at 202-294 folds into the ARID domain; that stretch reads DSKRKEFLDD…YLYPYECEKK (93 aa). Residues 298-369 are disordered; it reads SPSELQSAID…PPRLSPSTSP (72 aa). Over residues 316–325 the composition is skewed to basic residues; the sequence is PSYHSPHMHP. The REKLES domain maps to 389-479; it reads AAMLAELAER…GVLYPRGGTR (91 aa).

The protein localises to the nucleus. Its function is as follows. Transcription factor involved in skeletogenesis and oral ectoderm patterning. This chain is Protein dead ringer homolog (dri), found in Strongylocentrotus purpuratus (Purple sea urchin).